The sequence spans 86 residues: Arminin 7246 (86 aa).

The signal sequence occupies residues 1–18; that stretch reads MRPEYAVLFLALIALTYA. A propeptide spanning residues 19 to 57 is cleaved from the precursor; that stretch reads RSNEDVREEIKNEIEKDILEDLVEDEGELDDKAIDVNDA. Ala83 carries the alanine amide modification.

The protein belongs to the arminin family. In terms of tissue distribution, expressed in entodermal epithelium along the body column.

Its subcellular location is the secreted. The protein resides in the target cell membrane. Its function is as follows. Antimicrobial peptide with a broad-spectrum antimicrobial activity. Keeps its antibacterial activity under a wide range of salt concentrations that mimic physiological conditions of human blood, which is surprising, since Hydra is an obligate freshwater animal with nearly no salt tolerance. Does not affect red blood cells. In Hydra viridissima (Green hydra), this protein is Arminin 7246.